Consider the following 473-residue polypeptide: Siroheme synthase (473 aa).

Residues 1–203 form a precorrin-2 dehydrogenase /sirohydrochlorin ferrochelatase region; that stretch reads MQYLPIFTKL…GDTQAAEQQL (203 aa). NAD(+)-binding positions include 22-23 and 43-44; these read DV and PK. Serine 128 is modified (phosphoserine). The segment at 215 to 473 is uroporphyrinogen-III C-methyltransferase; the sequence is GEVYVVGAGP…SFAQPLTDVA (259 aa). An S-adenosyl-L-methionine-binding site is contributed by proline 224. Aspartate 247 serves as the catalytic Proton acceptor. Lysine 269 serves as the catalytic Proton donor. S-adenosyl-L-methionine-binding positions include 300–302, isoleucine 305, 330–331, methionine 382, and glycine 411; these read GGD and TA.

This sequence in the N-terminal section; belongs to the precorrin-2 dehydrogenase / sirohydrochlorin ferrochelatase family. It in the C-terminal section; belongs to the precorrin methyltransferase family.

The enzyme catalyses uroporphyrinogen III + 2 S-adenosyl-L-methionine = precorrin-2 + 2 S-adenosyl-L-homocysteine + H(+). It carries out the reaction precorrin-2 + NAD(+) = sirohydrochlorin + NADH + 2 H(+). The catalysed reaction is siroheme + 2 H(+) = sirohydrochlorin + Fe(2+). It functions in the pathway cofactor biosynthesis; adenosylcobalamin biosynthesis; precorrin-2 from uroporphyrinogen III: step 1/1. The protein operates within cofactor biosynthesis; adenosylcobalamin biosynthesis; sirohydrochlorin from precorrin-2: step 1/1. Its pathway is porphyrin-containing compound metabolism; siroheme biosynthesis; precorrin-2 from uroporphyrinogen III: step 1/1. It participates in porphyrin-containing compound metabolism; siroheme biosynthesis; siroheme from sirohydrochlorin: step 1/1. It functions in the pathway porphyrin-containing compound metabolism; siroheme biosynthesis; sirohydrochlorin from precorrin-2: step 1/1. Functionally, multifunctional enzyme that catalyzes the SAM-dependent methylations of uroporphyrinogen III at position C-2 and C-7 to form precorrin-2 via precorrin-1. Then it catalyzes the NAD-dependent ring dehydrogenation of precorrin-2 to yield sirohydrochlorin. Finally, it catalyzes the ferrochelation of sirohydrochlorin to yield siroheme. This chain is Siroheme synthase, found in Pseudoalteromonas translucida (strain TAC 125).